Here is a 463-residue protein sequence, read N- to C-terminus: Fumarate hydratase class II (463 aa).

Substrate is bound by residues Ser-97–Thr-99, His-128–Asp-131, Ser-138–Asn-140, and Thr-186. The active-site Proton donor/acceptor is His-187. The active site involves Ser-317. Substrate contacts are provided by residues Ser-318 and Lys-323–Asn-325.

The protein belongs to the class-II fumarase/aspartase family. Fumarase subfamily. Homotetramer.

Its subcellular location is the cytoplasm. The enzyme catalyses (S)-malate = fumarate + H2O. Its pathway is carbohydrate metabolism; tricarboxylic acid cycle; (S)-malate from fumarate: step 1/1. Functionally, involved in the TCA cycle. Catalyzes the stereospecific interconversion of fumarate to L-malate. The chain is Fumarate hydratase class II from Helicobacter pylori (strain J99 / ATCC 700824) (Campylobacter pylori J99).